Consider the following 324-residue polypeptide: Homocysteine S-methyltransferase 1 (324 aa).

Positions 6–320 (IKELIVEHPG…KDIAEIASAV (315 aa)) constitute a Hcy-binding domain. 3 residues coordinate Zn(2+): Cys238, Cys305, and Cys306.

The cofactor is Zn(2+).

The protein resides in the cytoplasm. The enzyme catalyses S-methyl-L-methionine + L-homocysteine = 2 L-methionine + H(+). Functionally, homocysteine S-methyltransferase involved in the conversion of S-adenosylmethionine (AdoMet) to methionine to control the methionine/AdoMet ratio. Also converts S-methylmethionine (SMM) to methionine. The polypeptide is Homocysteine S-methyltransferase 1 (MHT1) (Saccharomyces cerevisiae (strain ATCC 204508 / S288c) (Baker's yeast)).